The primary structure comprises 405 residues: Multidrug resistance protein MdtA (405 aa).

The signal sequence occupies residues 1-22; that stretch reads MKTPRRFPLIALTVAAVLTAAA. Residues 35–52 show a composition bias toward polar residues; the sequence is VQNRQGTEQQRASNSQGS. The tract at residues 35–62 is disordered; it reads VQNRQGTEQQRASNSQGSAKRAGNAPPV.

Belongs to the membrane fusion protein (MFP) (TC 8.A.1) family. In terms of assembly, part of a tripartite efflux system composed of MdtA, MdtB and MdtC.

The protein resides in the cell inner membrane. This is Multidrug resistance protein MdtA from Erwinia amylovora (strain ATCC 49946 / CCPPB 0273 / Ea273 / 27-3).